A 278-amino-acid chain; its full sequence is Tetraspanin-13 (278 aa).

Residues 1–25 (MARDKEDQNNENPSIVQNMSFPFNT) are Cytoplasmic-facing. Residues 26-46 (IFLISSAIFLVTAAFWFVAVM) traverse the membrane as a helical segment. At 47 to 62 (TLHYRTDECNRFVTTP) the chain is on the extracellular side. Residues 63 to 83 (GIFISFSLLAMSLTGFYAAYF) traverse the membrane as a helical segment. Over 84 to 92 (KSDCLFRIH) the chain is Cytoplasmic. A helical membrane pass occupies residues 93–113 (FFIFFLWMFVVVSKAIFVIFL). At 114-249 (HKETNPRLFP…DVHNTSFSIT (136 aa)) the chain is on the extracellular side. Asparagine 202, asparagine 220, and asparagine 243 each carry an N-linked (GlcNAc...) asparagine glycan. Residues 250 to 270 (VNIIHIIFSLCIGMTGWFAWL) form a helical membrane-spanning segment. Topologically, residues 271–278 (RILRESQK) are cytoplasmic.

It belongs to the tetraspanin (TM4SF) family.

It localises to the membrane. Functionally, may be involved in the regulation of cell differentiation. This chain is Tetraspanin-13 (TET13), found in Arabidopsis thaliana (Mouse-ear cress).